Consider the following 392-residue polypeptide: Speckle-type POZ protein-like B (392 aa).

An MATH domain is found at 31 to 161 (KFSYMWTINN…DDKLTLFCEV (131 aa)). The region spanning 200 to 267 (TDCSLFVGGQ…IYTGKAPNLE (68 aa)) is the BTB domain.

It belongs to the Tdpoz family. Homodimer. Heterodimer with SPOP. Component of cullin-RING-based BCR (BTB-CUL3-RBX1) E3 ubiquitin-protein ligase complexes containing homodimeric SPOPL or the heterodimer formed by SPOP and SPOPL.

The protein resides in the nucleus. It functions in the pathway protein modification; protein ubiquitination. Functionally, component of a cullin-RING-based BCR (BTB-CUL3-RBX1) E3 ubiquitin-protein ligase complex that mediates the ubiquitination and subsequent proteasomal degradation of target proteins, but with relatively low efficiency. The sequence is that of Speckle-type POZ protein-like B (spoplb) from Danio rerio (Zebrafish).